The primary structure comprises 129 residues: Intraflagellar transport protein 20 homolog (129 aa).

A coiled-coil region spans residues 89 to 121; it reads VLLQMTIRELTVEKERLRVELEAVRKIEKEQDE.

As to quaternary structure, component of the IFT complex B composed of at least che-2, che-13, dyf-1, dyf-3, dyf-6, dyf-11, dyf-13, ift-20, ift-74, ift-81, ifta-2, osm-1, osm-5 and osm-6.

It localises to the cell projection. The protein resides in the cilium. In terms of biological role, component of the intraflagellar transport (IFT) complex B required for transport of proteins in the motile cilium. Required for ciliary entrance and transport of specific ciliary cargo proteins such as che-3 which are related to motility. In Caenorhabditis elegans, this protein is Intraflagellar transport protein 20 homolog.